Consider the following 214-residue polypeptide: Probable GTP-binding protein EngB (214 aa).

One can recognise an EngB-type G domain in the interval 24 to 199 (GGYEVAFAGR…RGIVGGWLGL (176 aa)). Residues 32 to 39 (GRSNAGKS), 59 to 63 (GRTQQ), 77 to 80 (DLPG), 144 to 147 (TKAD), and 178 to 180 (YSG) contribute to the GTP site. Ser-39 and Thr-61 together coordinate Mg(2+).

It belongs to the TRAFAC class TrmE-Era-EngA-EngB-Septin-like GTPase superfamily. EngB GTPase family. It depends on Mg(2+) as a cofactor.

Its function is as follows. Necessary for normal cell division and for the maintenance of normal septation. The sequence is that of Probable GTP-binding protein EngB from Xanthomonas axonopodis pv. citri (strain 306).